Consider the following 282-residue polypeptide: Acetyl-coenzyme A carboxylase carboxyl transferase subunit beta (282 aa).

In terms of domain architecture, CoA carboxyltransferase N-terminal spans 29–282 (LMKRCPNCGL…LLKYGGMQDD (254 aa)). 4 residues coordinate Zn(2+): Cys33, Cys36, Cys51, and Cys54. A C4-type zinc finger spans residues 33-54 (CPNCGLEFFARRLDKYKTCPDC).

This sequence belongs to the AccD/PCCB family. As to quaternary structure, acetyl-CoA carboxylase is a heterohexamer composed of biotin carboxyl carrier protein (AccB), biotin carboxylase (AccC) and two subunits each of ACCase subunit alpha (AccA) and ACCase subunit beta (AccD). Zn(2+) is required as a cofactor.

The protein localises to the cytoplasm. The enzyme catalyses N(6)-carboxybiotinyl-L-lysyl-[protein] + acetyl-CoA = N(6)-biotinyl-L-lysyl-[protein] + malonyl-CoA. It functions in the pathway lipid metabolism; malonyl-CoA biosynthesis; malonyl-CoA from acetyl-CoA: step 1/1. Component of the acetyl coenzyme A carboxylase (ACC) complex. Biotin carboxylase (BC) catalyzes the carboxylation of biotin on its carrier protein (BCCP) and then the CO(2) group is transferred by the transcarboxylase to acetyl-CoA to form malonyl-CoA. The chain is Acetyl-coenzyme A carboxylase carboxyl transferase subunit beta from Lactobacillus delbrueckii subsp. bulgaricus (strain ATCC 11842 / DSM 20081 / BCRC 10696 / JCM 1002 / NBRC 13953 / NCIMB 11778 / NCTC 12712 / WDCM 00102 / Lb 14).